We begin with the raw amino-acid sequence, 482 residues long: MSEQGITVSKSEDFSEWYSQVLSKAGLVDLRYNVQGFVVHKPWLMRIIKAIYRFFEEELEKTGHEPVLFPLVIPEENFEKEKEHVEGFKPEVFWVTQAGDEKLERRLALRPTSETAFYYMYSYWIQSWRDLPLKLYQSVSVYRNEKNTRPLIRGREFLWIEAHDAFATHEEALNQIREDMENSRKVIWEKLGIPFLFLRRPPWDKFSGAEDTYAADTIMPDGRVLQISSTHDLGQRFAKAFNVTFLDKDGKRKYVWQTCYGPGIWRITAALIAIHGDDKGLVLPMNVAPIQVVIVPIYYKESDKERVLEKCRKLEAMIREAGYRVYLDAREEYTPGWKFNDWELKGVPVRLEVGVREVETGTVTVFRRDLRVKEKVADSELISHIRKLENDILEELKRRAKEFFESRIVTATRREEVEEALRSGKMVKMPFCGREECADDLKEATDGGKVRGTEIDFKEGDYGRCAWCGAPARLIVYVAKSY.

It belongs to the class-II aminoacyl-tRNA synthetase family. ProS type 3 subfamily. As to quaternary structure, homodimer.

Its subcellular location is the cytoplasm. The enzyme catalyses tRNA(Pro) + L-proline + ATP = L-prolyl-tRNA(Pro) + AMP + diphosphate. Its function is as follows. Catalyzes the attachment of proline to tRNA(Pro) in a two-step reaction: proline is first activated by ATP to form Pro-AMP and then transferred to the acceptor end of tRNA(Pro). The chain is Proline--tRNA ligase from Thermofilum pendens (strain DSM 2475 / Hrk 5).